The sequence spans 312 residues: tRNA dimethylallyltransferase (312 aa).

An ATP-binding site is contributed by 15 to 22 (GPTAAGKS). Residue 17–22 (TAAGKS) coordinates substrate. Positions 40–43 (DSMQ) are interaction with substrate tRNA.

Belongs to the IPP transferase family. Monomer. It depends on Mg(2+) as a cofactor.

It catalyses the reaction adenosine(37) in tRNA + dimethylallyl diphosphate = N(6)-dimethylallyladenosine(37) in tRNA + diphosphate. Its function is as follows. Catalyzes the transfer of a dimethylallyl group onto the adenine at position 37 in tRNAs that read codons beginning with uridine, leading to the formation of N6-(dimethylallyl)adenosine (i(6)A). This Streptomyces avermitilis (strain ATCC 31267 / DSM 46492 / JCM 5070 / NBRC 14893 / NCIMB 12804 / NRRL 8165 / MA-4680) protein is tRNA dimethylallyltransferase.